The sequence spans 160 residues: MNLNATILGQTISFVLFVWFCMKYVWYPFISIIEKRQKEISDNLVSATHAKTESERVNAEALLCLRQARVKAQEIIKQANKCKMQIINEAKHEAEKEQSRILSQAREQIIYERKRVTDELRKQISELVIEGTEKVIEHSINEMIDIDLLNNIINTLSYKD.

Residues 12–32 (ISFVLFVWFCMKYVWYPFISI) form a helical membrane-spanning segment.

The protein belongs to the ATPase B chain family. In terms of assembly, F-type ATPases have 2 components, F(1) - the catalytic core - and F(0) - the membrane proton channel. F(1) has five subunits: alpha(3), beta(3), gamma(1), delta(1), epsilon(1). F(0) has three main subunits: a(1), b(2) and c(10-14). The alpha and beta chains form an alternating ring which encloses part of the gamma chain. F(1) is attached to F(0) by a central stalk formed by the gamma and epsilon chains, while a peripheral stalk is formed by the delta and b chains.

Its subcellular location is the cell inner membrane. Its function is as follows. F(1)F(0) ATP synthase produces ATP from ADP in the presence of a proton or sodium gradient. F-type ATPases consist of two structural domains, F(1) containing the extramembraneous catalytic core and F(0) containing the membrane proton channel, linked together by a central stalk and a peripheral stalk. During catalysis, ATP synthesis in the catalytic domain of F(1) is coupled via a rotary mechanism of the central stalk subunits to proton translocation. In terms of biological role, component of the F(0) channel, it forms part of the peripheral stalk, linking F(1) to F(0). The chain is ATP synthase subunit b from Blochmanniella pennsylvanica (strain BPEN).